The following is a 117-amino-acid chain: DNA-binding protein DDB_G0278111 (117 aa).

The disordered stretch occupies residues 1–40; it reads MSSEKEIQQQLSQMQGQGFDPEAQQRQEAQRQEANERRQG. A compositionally biased stretch (low complexity) spans 8–22; the sequence is QQQLSQMQGQGFDPE. Residues 23–39 show a composition bias toward basic and acidic residues; that stretch reads AQQRQEAQRQEANERRQ.

Belongs to the PDCD5 family.

This Dictyostelium discoideum (Social amoeba) protein is DNA-binding protein DDB_G0278111.